Consider the following 1358-residue polypeptide: Xanthine dehydrogenase (1358 aa).

Residues 18 to 107 (NQLLFFLNGE…GMAVTTIEGL (90 aa)) form the 2Fe-2S ferredoxin-type domain. Cys56, Cys61, Cys64, Cys89, Cys129, Cys132, Cys164, and Cys166 together coordinate [2Fe-2S] cluster. Positions 253-447 (FTGSRVTWYT…ESVFIPYTRP (195 aa)) constitute an FAD-binding PCMH-type domain. FAD-binding positions include 281-288 (IVVGNTEI), Phe366, 376-380 (SIGGN), Asp389, Leu437, and Lys455. Mo-molybdopterin-binding residues include Gln805 and Phe836. 2 residues coordinate substrate: Glu840 and Arg918. Arg950 serves as a coordination point for Mo-molybdopterin. Residues Tyr952 and Thr1048 each coordinate substrate. Residue Ala1117 participates in Mo-molybdopterin binding. Catalysis depends on Glu1302, which acts as the Proton acceptor.

This sequence belongs to the xanthine dehydrogenase family. As to quaternary structure, homodimer. It depends on FAD as a cofactor. Mo-molybdopterin is required as a cofactor. Requires [2Fe-2S] cluster as cofactor.

It localises to the peroxisome. It carries out the reaction xanthine + NAD(+) + H2O = urate + NADH + H(+). The catalysed reaction is hypoxanthine + NAD(+) + H2O = xanthine + NADH + H(+). Functionally, key enzyme in purine degradation. Catalyzes the oxidation of hypoxanthine to xanthine. Catalyzes the oxidation of xanthine to uric acid. The polypeptide is Xanthine dehydrogenase (xdh) (Dictyostelium discoideum (Social amoeba)).